Here is a 120-residue protein sequence, read N- to C-terminus: Aspartate 1-decarboxylase (120 aa).

Residue Ser-25 is the Schiff-base intermediate with substrate; via pyruvic acid of the active site. At Ser-25 the chain carries Pyruvic acid (Ser). Thr-57 lines the substrate pocket. Catalysis depends on Tyr-58, which acts as the Proton donor. Residue 73–75 (GAA) participates in substrate binding.

Belongs to the PanD family. As to quaternary structure, heterooctamer of four alpha and four beta subunits. Pyruvate is required as a cofactor. Post-translationally, is synthesized initially as an inactive proenzyme, which is activated by self-cleavage at a specific serine bond to produce a beta-subunit with a hydroxyl group at its C-terminus and an alpha-subunit with a pyruvoyl group at its N-terminus.

Its subcellular location is the cytoplasm. It catalyses the reaction L-aspartate + H(+) = beta-alanine + CO2. It functions in the pathway cofactor biosynthesis; (R)-pantothenate biosynthesis; beta-alanine from L-aspartate: step 1/1. Its function is as follows. Catalyzes the pyruvoyl-dependent decarboxylation of aspartate to produce beta-alanine. This is Aspartate 1-decarboxylase from Deinococcus geothermalis (strain DSM 11300 / CIP 105573 / AG-3a).